A 377-amino-acid chain; its full sequence is Cytochrome b (377 aa).

The next 4 membrane-spanning stretches (helical) occupy residues 34-54, 78-100, 113-133, and 179-199; these read FGFL…FLSM, WLLR…IHIA, TWMT…LGYV, and FFTL…IHLL. 2 residues coordinate heme b: His84 and His98. The heme b site is built by His183 and His197. His202 provides a ligand contact to a ubiquinone. 4 helical membrane-spanning segments follow: residues 225–245, 288–308, 323–343, and 352–372; these read FTIK…ILVL, KLGG…LPLY, MLFW…AQAI, and QILT…SVLW.

This sequence belongs to the cytochrome b family. In terms of assembly, the main subunits of complex b-c1 are: cytochrome b, cytochrome c1 and the Rieske protein. Heme b serves as cofactor.

The protein localises to the mitochondrion inner membrane. Component of the ubiquinol-cytochrome c reductase complex (complex III or cytochrome b-c1 complex) that is part of the mitochondrial respiratory chain. The b-c1 complex mediates electron transfer from ubiquinol to cytochrome c. Contributes to the generation of a proton gradient across the mitochondrial membrane that is then used for ATP synthesis. The chain is Cytochrome b (mt:Cyt-b) from Priapulus caudatus (Priapulid worm).